The sequence spans 448 residues: UDP-N-acetylmuramoyl-L-alanine--L-glutamate ligase (448 aa).

118–124 (GSKGKST) is an ATP binding site.

Belongs to the MurCDEF family. MurD2 subfamily.

The protein localises to the cytoplasm. The enzyme catalyses UDP-N-acetyl-alpha-D-muramoyl-L-alanine + L-glutamate + ATP = UDP-N-acetyl-alpha-D-muramoyl-L-alanyl-L-glutamate + ADP + phosphate + H(+). The protein operates within cell wall biogenesis; peptidoglycan biosynthesis. Its function is as follows. Cell wall formation. Catalyzes the addition of L-glutamate to the nucleotide precursor UDP-N-acetylmuramoyl-L-alanine. In Salinispora tropica (strain ATCC BAA-916 / DSM 44818 / JCM 13857 / NBRC 105044 / CNB-440), this protein is UDP-N-acetylmuramoyl-L-alanine--L-glutamate ligase.